A 212-amino-acid chain; its full sequence is MSINEVFRSFKAQPVNQLAKIQAERPIWFVMVGAAIFLILSAIFYFQLFLAMAPCEKCVYIRFSQSCIVIAGLIILINPRNNILKTLGLLLAWYAMIQGWIWSFELMKIHDAAHMVVDESMDFFAAAGDAAGSACSTEPRFPLGLPLDKWLPFEFAPTGGCGEDDWALFGLNMAHYCMIAYATFMVCLAPLTLGWFASFMTDRRNTIVYQTR.

A helical transmembrane segment spans residues 27–49 (IWFVMVGAAIFLILSAIFYFQLF). Cys-55 and Cys-58 form a disulfide bridge. A run of 2 helical transmembrane segments spans residues 59–76 (VYIRFSQSCIVIAGLIIL) and 83–102 (ILKTLGLLLAWYAMIQGWIW). Cys-135 and Cys-161 are oxidised to a cystine. The helical transmembrane segment at 177-199 (CMIAYATFMVCLAPLTLGWFASF) threads the bilayer.

The protein belongs to the DsbB family. DsbI subfamily. Interacts with DsbL.

The protein resides in the cell inner membrane. In terms of biological role, required for disulfide bond formation in some proteins. Part of a redox system composed of DsbI and DsbL that mediates formation of an essential disulfide bond in AssT. The chain is Putative protein-disulfide oxidoreductase DsbI (dsbI) from Shewanella oneidensis (strain ATCC 700550 / JCM 31522 / CIP 106686 / LMG 19005 / NCIMB 14063 / MR-1).